Reading from the N-terminus, the 348-residue chain is Erythronate-4-phosphate dehydrogenase (348 aa).

Residues T46 and T67 each coordinate substrate. D147 serves as a coordination point for NAD(+). Residue R209 is part of the active site. D233 contacts NAD(+). The active site involves E238. Residue H255 is the Proton donor of the active site. G258 serves as a coordination point for NAD(+). Y259 provides a ligand contact to substrate.

Belongs to the D-isomer specific 2-hydroxyacid dehydrogenase family. PdxB subfamily. In terms of assembly, homodimer.

The protein localises to the cytoplasm. It carries out the reaction 4-phospho-D-erythronate + NAD(+) = (R)-3-hydroxy-2-oxo-4-phosphooxybutanoate + NADH + H(+). Its pathway is cofactor biosynthesis; pyridoxine 5'-phosphate biosynthesis; pyridoxine 5'-phosphate from D-erythrose 4-phosphate: step 2/5. In terms of biological role, catalyzes the oxidation of erythronate-4-phosphate to 3-hydroxy-2-oxo-4-phosphonooxybutanoate. This Bacteroides fragilis (strain ATCC 25285 / DSM 2151 / CCUG 4856 / JCM 11019 / LMG 10263 / NCTC 9343 / Onslow / VPI 2553 / EN-2) protein is Erythronate-4-phosphate dehydrogenase.